Reading from the N-terminus, the 515-residue chain is Calcium-dependent protein kinase 2 (515 aa).

The segment at 1–51 (MGNCCPGSGDAEPASSDASTGNGSSSFKAGASPSSAPAQNKPPAPIGPVLG) is disordered. G2 carries the N-myristoyl glycine lipid modification. The segment covering 14-38 (ASSDASTGNGSSSFKAGASPSSAPA) has biased composition (low complexity). The 259-residue stretch at 61 to 319 (YTIGKELGRG…AYEVLNHPWI (259 aa)) folds into the Protein kinase domain. ATP is bound by residues 67–75 (LGRGQFGVT) and K90. D185 acts as the Proton acceptor in catalysis. Positions 325–355 (APDTPLDNAVMNRLKQFRAMNQFKKAALRVI) are autoinhibitory domain. 4 EF-hand domains span residues 362 to 397 (EEIR…QGTK), 398 to 433 (LTEA…MNRM), 434 to 469 (DREE…KGLL), and 473 to 504 (DIKD…GNPE). Residues D375, D377, S379, T381, E386, D411, D413, N415, T417, E422, D447, D449, S451, C453, E458, D482, D484, D486, R488, and E493 each contribute to the Ca(2+) site.

Belongs to the protein kinase superfamily. Ser/Thr protein kinase family. CDPK subfamily. Expressed in heading panicles, spikelets and mature pollen grains.

It localises to the membrane. The catalysed reaction is L-seryl-[protein] + ATP = O-phospho-L-seryl-[protein] + ADP + H(+). It catalyses the reaction L-threonyl-[protein] + ATP = O-phospho-L-threonyl-[protein] + ADP + H(+). Activated by calcium. Autophosphorylation may play an important role in the regulation of the kinase activity. Its function is as follows. May play a role in signal transduction pathways that involve calcium as a second messenger. The chain is Calcium-dependent protein kinase 2 from Oryza sativa subsp. japonica (Rice).